The primary structure comprises 209 residues: Orotate phosphoribosyltransferase (209 aa).

Residues Arg-96, Lys-100, His-102, and 122 to 130 each bind 5-phospho-alpha-D-ribose 1-diphosphate; that span reads EDLISTGGS. Ser-126 contacts orotate.

Belongs to the purine/pyrimidine phosphoribosyltransferase family. PyrE subfamily. Homodimer. It depends on Mg(2+) as a cofactor.

It catalyses the reaction orotidine 5'-phosphate + diphosphate = orotate + 5-phospho-alpha-D-ribose 1-diphosphate. It participates in pyrimidine metabolism; UMP biosynthesis via de novo pathway; UMP from orotate: step 1/2. Catalyzes the transfer of a ribosyl phosphate group from 5-phosphoribose 1-diphosphate to orotate, leading to the formation of orotidine monophosphate (OMP). This is Orotate phosphoribosyltransferase from Listeria innocua serovar 6a (strain ATCC BAA-680 / CLIP 11262).